The chain runs to 564 residues: R-linalool synthase (564 aa).

Mg(2+)-binding residues include D320, D324, D464, T468, and E472. A DDXXD motif motif is present at residues 320 to 324 (DDVYD).

This sequence belongs to the terpene synthase family. Mg(2+) serves as cofactor. The cofactor is Mn(2+).

It carries out the reaction (2E)-geranyl diphosphate + H2O = (R)-linalool + diphosphate. Its function is as follows. Specifically catalyzes production of (R)-(-)-linalool, the main component of lavender essential oil. In Lavandula angustifolia (Lavender), this protein is R-linalool synthase.